A 294-amino-acid polypeptide reads, in one-letter code: Phosphonoacetaldehyde hydrolase (294 aa).

The active-site Nucleophile is Asp-19. Mg(2+)-binding residues include Asp-19 and Ala-21. Residue Lys-60 is the Schiff-base intermediate with substrate of the active site. Asp-193 contributes to the Mg(2+) binding site.

This sequence belongs to the HAD-like hydrolase superfamily. PhnX family. In terms of assembly, homodimer. Mg(2+) is required as a cofactor.

It catalyses the reaction phosphonoacetaldehyde + H2O = acetaldehyde + phosphate + H(+). Involved in phosphonate degradation. In Hahella chejuensis (strain KCTC 2396), this protein is Phosphonoacetaldehyde hydrolase.